The primary structure comprises 457 residues: Aromatic amino acid transport protein AroP (457 aa).

The Cytoplasmic segment spans residues 1–20; the sequence is MMDSQQHGEQLKRGLKNRHI. Residues 21 to 41 form a helical membrane-spanning segment; sequence QLIALGGAIGTGLFLGSASVI. Gln42 is a topological domain (periplasmic). Residues 43–63 form a helical membrane-spanning segment; sequence SAGPGIILGYAIAGFIAFLIM. The Cytoplasmic portion of the chain corresponds to 64–86; it reads RQLGEMVVEEPVAGSFSHFAYKY. Residues 87–107 form a helical membrane-spanning segment; it reads WGGFAGFASGWNYWVLYVLVA. Topologically, residues 108–117 are periplasmic; the sequence is MAELTAVGKY. Residues 118-138 traverse the membrane as a helical segment; sequence IQFWYPEIPTWASAAAFFVII. At 139 to 155 the chain is on the cytoplasmic side; sequence NAINLTNVKVFGEMEFW. The helical transmembrane segment at 156–176 threads the bilayer; it reads FAIIKVIAVIAMILFGAWLLF. Residues 177–201 are Periplasmic-facing; it reads SDTAGPQATVRNLWEQGGFLPHGWT. A helical membrane pass occupies residues 202 to 222; sequence GLVMMMAIIMFSFGGLELVGI. The Cytoplasmic portion of the chain corresponds to 223 to 240; the sequence is TAAEADNPEQSIPKATNQ. Residues 241-261 traverse the membrane as a helical segment; it reads VIYRILIFYIGSLAVLLSLLP. The Periplasmic segment spans residues 262-271; the sequence is WTRVTADTSP. A helical membrane pass occupies residues 272–292; that stretch reads FVLIFHELGDTFVANALNIVV. Residues 293–333 lie on the Cytoplasmic side of the membrane; that stretch reads LTAALSVYNSCVYCNSRMLFGLAQQGNAPKALLNVDKRGVP. A helical transmembrane segment spans residues 334–354; that stretch reads VSSILVSAVVTALCVLLNYLA. Residues 355 to 358 lie on the Periplasmic side of the membrane; the sequence is PESA. The helical transmembrane segment at 359–379 threads the bilayer; sequence FGLLMALVVSALVINWAMISL. Over 380 to 400 the chain is Cytoplasmic; sequence AHMMFRRAKQQQGVKTRFPAL. Residues 401–421 traverse the membrane as a helical segment; it reads FYPFGNVLCLLFMAAVLIIML. Topologically, residues 422–425 are periplasmic; sequence MTPG. Residues 426-446 form a helical membrane-spanning segment; the sequence is MAISVWLIPVWLLILGVGYLC. Over 447 to 457 the chain is Cytoplasmic; it reads KEKTAKTVKAH.

This sequence belongs to the amino acid-polyamine-organocation (APC) superfamily. Amino acid transporter (AAT) (TC 2.A.3.1) family.

The protein localises to the cell inner membrane. It carries out the reaction L-phenylalanine(in) + H(+)(in) = L-phenylalanine(out) + H(+)(out). It catalyses the reaction L-tryptophan(in) + H(+)(in) = L-tryptophan(out) + H(+)(out). The enzyme catalyses L-tyrosine(in) + H(+)(in) = L-tyrosine(out) + H(+)(out). Its function is as follows. Permease that is involved in the active transport across the cytoplasmic membrane of all three aromatic amino acids, phenylalanine, tyrosine and tryptophan. This Salmonella typhi protein is Aromatic amino acid transport protein AroP (aroP).